Here is a 563-residue protein sequence, read N- to C-terminus: Membrane protein insertase YidC (563 aa).

Residues 6 to 26 form a helical membrane-spanning segment; that stretch reads TVLWMIFSFSLLLLWNNWQIH. Residues 36 to 70 are disordered; that stretch reads PAPEAAATQQPKADANGTAASSTASIPSSPAAAPA. The segment covering 54 to 70 has biased composition (low complexity); the sequence is AASSTASIPSSPAAAPA. A run of 4 helical transmembrane segments spans residues 373–393, 443–463, 482–502, and 512–532; these read WGWT…PLAA, LPMV…LASV, PFFI…KLNP, and VMMI…AGLV.

Belongs to the OXA1/ALB3/YidC family. Type 1 subfamily. As to quaternary structure, interacts with the Sec translocase complex via SecD. Specifically interacts with transmembrane segments of nascent integral membrane proteins during membrane integration.

The protein resides in the cell membrane. In terms of biological role, required for the insertion and/or proper folding and/or complex formation of integral membrane proteins into the membrane. Involved in integration of membrane proteins that insert both dependently and independently of the Sec translocase complex, as well as at least some lipoproteins. Aids folding of multispanning membrane proteins. This Bordetella bronchiseptica (strain ATCC BAA-588 / NCTC 13252 / RB50) (Alcaligenes bronchisepticus) protein is Membrane protein insertase YidC.